Consider the following 348-residue polypeptide: Nuclear receptor subfamily 1 group I member 3 (348 aa).

The segment at residues P8–S83 is a DNA-binding region (nuclear receptor). Residues C11–C31 form an NR C4-type zinc finger. T38 is subject to Phosphothreonine; by PKC. The segment at C47–C71 adopts an NR C4-type zinc-finger fold. The NR LBD domain maps to G109–S348.

This sequence belongs to the nuclear hormone receptor family. NR1 subfamily. In terms of assembly, heterodimer of NR1I3 and RXR. Interacts with PSMC4. Interacts with ECT2. Directly interacts with DNAJC7; this complex may also include HSP90. Interacts with CRY1. Interacts with CRY2 in a ligand-dependent manner. Phosphorylated at Thr-38 by PKC, dephosphorylation of Thr-38 is required for nuclear translocation and activation.

Its subcellular location is the nucleus. It localises to the cytoplasm. The protein localises to the cytoskeleton. Its function is as follows. Binds and transactivates the retinoic acid response elements that control expression of the retinoic acid receptor beta 2 and alcohol dehydrogenase 3 genes. Transactivates both the phenobarbital responsive element module of the human CYP2B6 gene and the CYP3A4 xenobiotic response element. The sequence is that of Nuclear receptor subfamily 1 group I member 3 (NR1I3) from Pusa sibirica (Baikal seal).